The sequence spans 680 residues: PAN2-PAN3 deadenylation complex subunit PAN3 (680 aa).

Disordered stretches follow at residues Met-1 to Thr-26, His-51 to Thr-87, and Phe-99 to Pro-120. The C3H1-type zinc finger occupies Asp-25–Thr-54. Basic and acidic residues predominate over residues Asp-52–Thr-64. The PABPC-interacting motif-2 (PAM-2) motif lies at Ala-62–Gln-82. Residues Phe-99–Thr-117 show a composition bias toward low complexity. The pseudokinase domain stretch occupies residues Gln-256–Asn-522. ATP-binding positions include Arg-311, Glu-360 to Thr-367, and Thr-422 to Lys-423. Residues Glu-523 to Thr-561 are a coiled coil. The interval Ile-562–Phe-680 is knob domain. Residues Ser-655–His-669 are compositionally biased toward gly residues. The interval Ser-655–Phe-680 is disordered. The segment covering Gly-670–Phe-680 has biased composition (basic residues).

It belongs to the protein kinase superfamily. PAN3 family. In terms of assembly, homodimer. Forms a heterotrimer with a catalytic subunit PAN2 to form the poly(A)-nuclease (PAN) deadenylation complex. Interacts (via PAM-2 motif) with poly(A)-binding protein PAB1 (via PABC domain), conferring substrate specificity of the enzyme complex.

It localises to the cytoplasm. Functionally, regulatory subunit of the poly(A)-nuclease (PAN) deadenylation complex, one of two cytoplasmic mRNA deadenylases involved in mRNA turnover. PAN specifically shortens poly(A) tails of RNA and the activity is stimulated by poly(A)-binding protein PAB1. PAN deadenylation is followed by rapid degradation of the shortened mRNA tails by the CCR4-NOT complex. Deadenylated mRNAs are then degraded by two alternative mechanisms, namely exosome-mediated 3'-5' exonucleolytic degradation, or deadenylation-dependent mRNA decaping and subsequent 5'-3' exonucleolytic degradation by XRN1. May also be involved in post-transcriptional maturation of mRNA poly(A) tails. PAN3 acts as a positive regulator for PAN activity, recruiting the catalytic subunit PAN2 to mRNA via its interaction with RNA and with PAB1. In Pyricularia oryzae (strain 70-15 / ATCC MYA-4617 / FGSC 8958) (Rice blast fungus), this protein is PAN2-PAN3 deadenylation complex subunit PAN3.